Reading from the N-terminus, the 63-residue chain is Small ribosomal subunit protein eS17 (63 aa).

It belongs to the eukaryotic ribosomal protein eS17 family.

This is Small ribosomal subunit protein eS17 from Methanococcus aeolicus (strain ATCC BAA-1280 / DSM 17508 / OCM 812 / Nankai-3).